We begin with the raw amino-acid sequence, 294 residues long: 4-hydroxy-tetrahydrodipicolinate synthase (294 aa).

Residue Thr-47 coordinates pyruvate. Tyr-135 acts as the Proton donor/acceptor in catalysis. Lys-163 functions as the Schiff-base intermediate with substrate in the catalytic mechanism. Val-205 serves as a coordination point for pyruvate.

The protein belongs to the DapA family. Homotetramer; dimer of dimers.

Its subcellular location is the cytoplasm. The enzyme catalyses L-aspartate 4-semialdehyde + pyruvate = (2S,4S)-4-hydroxy-2,3,4,5-tetrahydrodipicolinate + H2O + H(+). It participates in amino-acid biosynthesis; L-lysine biosynthesis via DAP pathway; (S)-tetrahydrodipicolinate from L-aspartate: step 3/4. Its function is as follows. Catalyzes the condensation of (S)-aspartate-beta-semialdehyde [(S)-ASA] and pyruvate to 4-hydroxy-tetrahydrodipicolinate (HTPA). The chain is 4-hydroxy-tetrahydrodipicolinate synthase from Rickettsia bellii (strain OSU 85-389).